Here is a 526-residue protein sequence, read N- to C-terminus: MSNLFDSDSPTNLAEYSVSELSGSIKRTVETAFDQVRVRGEISGYRGPHSSGHAYFALKDDRARIDAVIWKGTFSRLKFRPEEGMEVIATGKVTTFPGSSKYQIVIETLEPAGAGALMALIEERKRKLGAEGLFDAARKKRLPFMPKVIGVVTSPTGAVIRDILHRISDRFPVHVLVWPVKVQGEGAGDEVANAIRGFNALEPGGAIARPDVLIVARGGGSLEDLWSFNDEIVVRAAAESRIPLISAVGHETDWTLIDYAADVRAPTPTGAAEMAVPVKAELEAQATALAARLQGCINRQMDQRRQSVRALMRALPSLDQLLALPRRRFDEAAAGLGRGLELNTINKRRGFERVASHLRPDVLSNRIAERRQLLNDRMARAERTVERLLDRSKSRIDRAEAILASLPTRLKTQTDRGRERLGNLTRHADTAIRHQLTRARAELSAQDRVLQSLSYKNVLKRGYAVIRDEDDRPVSQAAALSAGMGIAIEFADGRVGAMTTEGGTPPAGAKKRSAKPADPTKQGSLF.

The disordered stretch occupies residues 496-526 (GAMTTEGGTPPAGAKKRSAKPADPTKQGSLF).

The protein belongs to the XseA family. As to quaternary structure, heterooligomer composed of large and small subunits.

Its subcellular location is the cytoplasm. The enzyme catalyses Exonucleolytic cleavage in either 5'- to 3'- or 3'- to 5'-direction to yield nucleoside 5'-phosphates.. Its function is as follows. Bidirectionally degrades single-stranded DNA into large acid-insoluble oligonucleotides, which are then degraded further into small acid-soluble oligonucleotides. The sequence is that of Exodeoxyribonuclease 7 large subunit from Rhizobium etli (strain CIAT 652).